A 560-amino-acid chain; its full sequence is MLRGTLLCAVLGLLRAQPFPCPPACKCVFRDAAQCSGGDVARISALGLPTNLTHILLFGMGRGVLQSQSFSGMTVLQRLMISDSHISAVAPGTFSDLIKLKTLRLSRNKITHLPGALLDKMVLLEQLFLDHNALRGIDQNMFQKLVNLQELALNQNQLDFLPASLFTNLENLKLLDLSGNNLTHLPKGLLGAQAKLERLLLHSNRLVSLDSGLLNSLGALTELQFHRNHIRSIAPGAFDRLPNLSSLTLSRNHLAFLPSALFLHSHNLTLLTLFENPLAELPGVLFGEMGGLQELWLNRTQLRTLPAAAFRNLSRLRYLGVTLSPRLSALPQGAFQGLGELQVLALHSNGLTALPDGLLRGLGKLRQVSLRRNRLRALPRALFRNLSSLESVQLDHNQLETLPGDVFGALPRLTEVLLGHNSWRCDCGLGPFLGWLRQHLGLVGGEEPPRCAGPGAHAGLPLWALPGGDAECPGPRGPPPRPAADSSSEAPVHPALAPNSSEPWVWAQPVTTGKGQDHSPFWGFYFLLLAVQAMITVIIVFAMIKIGQLFRKLIRERALG.

A signal peptide spans 1–16 (MLRGTLLCAVLGLLRA). Residues 17-50 (QPFPCPPACKCVFRDAAQCSGGDVARISALGLPT) enclose the LRRNT domain. The Extracellular portion of the chain corresponds to 17 to 523 (QPFPCPPACK…KGQDHSPFWG (507 aa)). An N-linked (GlcNAc...) asparagine glycan is attached at N51. 13 LRR repeats span residues 75 to 96 (VLQR…TFSD), 99 to 120 (KLKT…LLDK), 123 to 144 (LLEQ…MFQK), 147 to 168 (NLQE…LFTN), 171 to 193 (NLKL…LGAQ), 195 to 216 (KLER…LLNS), 219 to 240 (ALTE…AFDR), 243 to 264 (NLSS…LFLH), 267 to 288 (NLTL…LFGE), 291 to 312 (GLQE…AFRN), 340 to 361 (ELQV…LLRG), 364 to 385 (KLRQ…LFRN), and 388 to 409 (SLES…VFGA). The N-linked (GlcNAc...) (complex) asparagine glycan is linked to N181. N-linked (GlcNAc...) (complex) asparagine glycosylation occurs at N243. 3 N-linked (GlcNAc...) asparagine glycosylation sites follow: N267, N298, and N312. N385 carries an N-linked (GlcNAc...) asparagine glycan. The LRRCT domain maps to 421-474 (NSWRCDCGLGPFLGWLRQHLGLVGGEEPPRCAGPGAHAGLPLWALPGGDAECPG). The interval 469 to 498 (DAECPGPRGPPPRPAADSSSEAPVHPALAP) is disordered. The N-linked (GlcNAc...) asparagine glycan is linked to N499. Residues 524 to 544 (FYFLLLAVQAMITVIIVFAMI) traverse the membrane as a helical segment. At 545-560 (KIGQLFRKLIRERALG) the chain is on the cytoplasmic side.

Post-translationally, the N-terminus is blocked. As to expression, platelets and megakaryocytes.

The protein resides in the membrane. The GPIb-V-IX complex functions as the vWF receptor and mediates vWF-dependent platelet adhesion to blood vessels. The adhesion of platelets to injured vascular surfaces in the arterial circulation is a critical initiating event in hemostasis. The sequence is that of Platelet glycoprotein V (GP5) from Homo sapiens (Human).